The chain runs to 444 residues: Glutamate--tRNA ligase (444 aa).

The 'HIGH' region motif lies at 12 to 22 (PSPTGFLHVGG). The short motif at 213–217 (KMSKR) is the 'KMSKS' region element. ATP is bound at residue Lys-216.

This sequence belongs to the class-I aminoacyl-tRNA synthetase family. Glutamate--tRNA ligase type 1 subfamily. As to quaternary structure, monomer.

Its subcellular location is the cytoplasm. The catalysed reaction is tRNA(Glu) + L-glutamate + ATP = L-glutamyl-tRNA(Glu) + AMP + diphosphate. In terms of biological role, catalyzes the attachment of glutamate to tRNA(Glu) in a two-step reaction: glutamate is first activated by ATP to form Glu-AMP and then transferred to the acceptor end of tRNA(Glu). The chain is Glutamate--tRNA ligase from Methylacidiphilum infernorum (isolate V4) (Methylokorus infernorum (strain V4)).